An 88-amino-acid polypeptide reads, in one-letter code: RQC P-site tRNA stabilizing factor (88 aa).

Positions 1-60 (MRLDKYLKVSRIIKRRTVAKEVADKGRIKVNGILAKSSTDLKVNDQVEIRFGNKLLLVKV) constitute an S4 RNA-binding domain.

This sequence belongs to the RqcP family. Associates with stalled 50S ribosomal subunits. Binds to RqcH, 23S rRNA and the P-site tRNA. Does not require RqcH for association with 50S subunits.

Key component of the ribosome quality control system (RQC), a ribosome-associated complex that mediates the extraction of incompletely synthesized nascent chains from stalled ribosomes and their subsequent degradation. RqcH recruits Ala-charged tRNA, and with RqcP directs the elongation of stalled nascent chains on 50S ribosomal subunits, leading to non-templated C-terminal alanine extensions (Ala tail). The Ala tail promotes nascent chain degradation. RqcP is associated with the translocation-like movement of the peptidyl-tRNA from the A-site into the P-site. This is RQC P-site tRNA stabilizing factor from Streptococcus pneumoniae (strain ATCC BAA-255 / R6).